The primary structure comprises 113 residues: UPF0482 protein YnfB (113 aa).

The N-terminal stretch at 1-28 (MKITLSKRIGLLAFLLPCALALSTTVHA) is a signal peptide.

The protein belongs to the UPF0482 family.

The polypeptide is UPF0482 protein YnfB (Shigella dysenteriae serotype 1 (strain Sd197)).